Here is a 187-residue protein sequence, read N- to C-terminus: MYMQVETRTSSRLHLKRAPGIRSWSLLVGILSIGLAAAYYSGDSLGWKLFYVTGCLFVAVQNLEDWEEAIFNKSTGKVVLKTFSLYRKLLTLCRAGHDQVVVLLSDIRDVNVEEEKVRYFGKGYVVVLRFATGFSHPLTQSAVMGHRSDVEVIAKLITTFLELHRLESPVELSQSSDSEADSPGDQS.

The chain crosses the membrane as a helical span at residues 20–42 (GIRSWSLLVGILSIGLAAAYYSG). Position 168 is a phosphoserine (Ser-168).

This sequence belongs to the CYBC1 family. As to quaternary structure, interacts with CYBB; CYBC1 may act as a chaperone stabilizing Cytochrome b-245 heterodimer.

The protein resides in the endoplasmic reticulum membrane. In terms of biological role, functions as a chaperone necessary for a stable expression of the CYBA and CYBB subunits of the cytochrome b-245 heterodimer. Controls the phagocyte respiratory burst and is essential for innate immunity. This Bos taurus (Bovine) protein is Cytochrome b-245 chaperone 1.